The chain runs to 277 residues: Large ribosomal subunit protein uL2 (277 aa).

Disordered regions lie at residues 37–60 and 223–265; these read KNSTAGRNSNGHITTRHKGGGHKH and VVMN…KRTD. The segment covering 39 to 49 has biased composition (polar residues); that stretch reads STAGRNSNGHI. A compositionally biased stretch (basic residues) spans 50 to 60; sequence TTRHKGGGHKH. Basic and acidic residues predominate over residues 229-244; sequence DHPHGGGEGRTGEARE.

Belongs to the universal ribosomal protein uL2 family. Part of the 50S ribosomal subunit. Forms a bridge to the 30S subunit in the 70S ribosome.

In terms of biological role, one of the primary rRNA binding proteins. Required for association of the 30S and 50S subunits to form the 70S ribosome, for tRNA binding and peptide bond formation. It has been suggested to have peptidyltransferase activity; this is somewhat controversial. Makes several contacts with the 16S rRNA in the 70S ribosome. The sequence is that of Large ribosomal subunit protein uL2 from Neisseria meningitidis serogroup C (strain 053442).